Here is a 496-residue protein sequence, read N- to C-terminus: Membrane-bound lytic murein transglycosylase F (496 aa).

Residues 1 to 31 (MPIFSTRVLTYLRCIFRLFIGLTLLLTLVGC) form the signal peptide. The interval 32–271 (DFYTPSSQLE…KLDEKYFGHV (240 aa)) is non-LT domain. The tract at residues 273–496 (NFDFVDTRTF…AEVVKQITLR (224 aa)) is LT domain. Residue glutamate 316 is part of the active site. The tract at residues 464-486 (HRREELDDDDSSEPPSAERPTVI) is disordered.

It in the N-terminal section; belongs to the bacterial solute-binding protein 3 family. The protein in the C-terminal section; belongs to the transglycosylase Slt family.

The protein resides in the cell outer membrane. The enzyme catalyses Exolytic cleavage of the (1-&gt;4)-beta-glycosidic linkage between N-acetylmuramic acid (MurNAc) and N-acetylglucosamine (GlcNAc) residues in peptidoglycan, from either the reducing or the non-reducing ends of the peptidoglycan chains, with concomitant formation of a 1,6-anhydrobond in the MurNAc residue.. Its function is as follows. Murein-degrading enzyme that degrades murein glycan strands and insoluble, high-molecular weight murein sacculi, with the concomitant formation of a 1,6-anhydromuramoyl product. Lytic transglycosylases (LTs) play an integral role in the metabolism of the peptidoglycan (PG) sacculus. Their lytic action creates space within the PG sacculus to allow for its expansion as well as for the insertion of various structures such as secretion systems and flagella. The chain is Membrane-bound lytic murein transglycosylase F from Aeromonas hydrophila subsp. hydrophila (strain ATCC 7966 / DSM 30187 / BCRC 13018 / CCUG 14551 / JCM 1027 / KCTC 2358 / NCIMB 9240 / NCTC 8049).